The primary structure comprises 73 residues: Translation initiation factor IF-1 (73 aa).

Positions 1-73 (MAKKDGAIEV…TRGRIVYRYK (73 aa)) constitute an S1-like domain.

This sequence belongs to the IF-1 family. As to quaternary structure, component of the 30S ribosomal translation pre-initiation complex which assembles on the 30S ribosome in the order IF-2 and IF-3, IF-1 and N-formylmethionyl-tRNA(fMet); mRNA recruitment can occur at any time during PIC assembly.

It localises to the cytoplasm. One of the essential components for the initiation of protein synthesis. Stabilizes the binding of IF-2 and IF-3 on the 30S subunit to which N-formylmethionyl-tRNA(fMet) subsequently binds. Helps modulate mRNA selection, yielding the 30S pre-initiation complex (PIC). Upon addition of the 50S ribosomal subunit IF-1, IF-2 and IF-3 are released leaving the mature 70S translation initiation complex. This is Translation initiation factor IF-1 from Mycolicibacterium gilvum (strain PYR-GCK) (Mycobacterium gilvum (strain PYR-GCK)).